Consider the following 247-residue polypeptide: 2,3-bisphosphoglycerate-dependent phosphoglycerate mutase (247 aa).

Substrate is bound by residues 8–15 (RHGESQWN), 21–22 (TG), R60, 87–90 (ERHY), K98, 114–115 (RR), and 183–184 (GN). The active-site Tele-phosphohistidine intermediate is the H9. The active-site Proton donor/acceptor is the E87.

Belongs to the phosphoglycerate mutase family. BPG-dependent PGAM subfamily.

The enzyme catalyses (2R)-2-phosphoglycerate = (2R)-3-phosphoglycerate. It functions in the pathway carbohydrate degradation; glycolysis; pyruvate from D-glyceraldehyde 3-phosphate: step 3/5. Functionally, catalyzes the interconversion of 2-phosphoglycerate and 3-phosphoglycerate. This chain is 2,3-bisphosphoglycerate-dependent phosphoglycerate mutase, found in Prosthecochloris aestuarii (strain DSM 271 / SK 413).